The primary structure comprises 194 residues: Peptidyl-tRNA hydrolase (194 aa).

Tyr16 contributes to the tRNA binding site. The active-site Proton acceptor is the His21. TRNA-binding residues include Phe67, Asn69, and Asn115.

The protein belongs to the PTH family. Monomer.

Its subcellular location is the cytoplasm. The catalysed reaction is an N-acyl-L-alpha-aminoacyl-tRNA + H2O = an N-acyl-L-amino acid + a tRNA + H(+). In terms of biological role, hydrolyzes ribosome-free peptidyl-tRNAs (with 1 or more amino acids incorporated), which drop off the ribosome during protein synthesis, or as a result of ribosome stalling. Its function is as follows. Catalyzes the release of premature peptidyl moieties from peptidyl-tRNA molecules trapped in stalled 50S ribosomal subunits, and thus maintains levels of free tRNAs and 50S ribosomes. The chain is Peptidyl-tRNA hydrolase from Salmonella heidelberg (strain SL476).